Consider the following 160-residue polypeptide: pH-gated potassium channel KcsA (160 aa).

The Cytoplasmic portion of the chain corresponds to 1-27 (MPPMLSGLLARLVKLLLGRHGSALHWR). A helical membrane pass occupies residues 28-50 (AAGAATVLLVIVLLAGSYLAVLA). At 51-61 (ERGAPGAQLIT) the chain is on the extracellular side. An intramembrane region (helical; Pore-forming) is located at residues 62-72 (YPRALWWSVET). The pore-forming intramembrane region spans 73–80 (ATTVGYGD). The Selectivity filter motif lies at 75 to 80 (TVGYGD). Residues 81-87 (LYPVTLW) lie on the Extracellular side of the membrane. The helical transmembrane segment at 88–111 (GRLVAVVVMVAGITSFGLVTAALA) threads the bilayer. Residues 112–160 (TWFVGREQERRGHFVRHSEKAAEEAYTRTTRALHERFDRLERMLDDNRR) lie on the Cytoplasmic side of the membrane.

It belongs to the potassium channel family. In terms of assembly, homotetramer.

It is found in the cell membrane. Acts as a pH-gated potassium ion channel; changing the cytosolic pH from 7 to 4 opens the channel. This Streptomyces coelicolor (strain ATCC BAA-471 / A3(2) / M145) protein is pH-gated potassium channel KcsA (kcsA).